A 202-amino-acid chain; its full sequence is Small ribosomal subunit protein uS4c (202 aa).

The S4 RNA-binding domain occupies 90–158 (MRSDNVIFRL…ISKNIELYQK (69 aa)).

It belongs to the universal ribosomal protein uS4 family. Part of the 30S ribosomal subunit. Contacts protein S5. The interaction surface between S4 and S5 is involved in control of translational fidelity.

The protein localises to the plastid. It localises to the chloroplast. Its function is as follows. One of the primary rRNA binding proteins, it binds directly to 16S rRNA where it nucleates assembly of the body of the 30S subunit. In terms of biological role, with S5 and S12 plays an important role in translational accuracy. The sequence is that of Small ribosomal subunit protein uS4c (rps4) from Exsertotheca crispa (Moss).